Here is a 155-residue protein sequence, read N- to C-terminus: Transcriptional repressor NrdR (155 aa).

A zinc finger lies at 3-34; that stretch reads CPFCGNVDTQVKDSRPAEDHVAIRRRRFCPAC. The 91-residue stretch at 49-139 folds into the ATP-cone domain; sequence LVVIKSSGKR…VYKNFQAADD (91 aa).

Belongs to the NrdR family. The cofactor is Zn(2+).

Negatively regulates transcription of bacterial ribonucleotide reductase nrd genes and operons by binding to NrdR-boxes. This is Transcriptional repressor NrdR from Dinoroseobacter shibae (strain DSM 16493 / NCIMB 14021 / DFL 12).